Here is a 491-residue protein sequence, read N- to C-terminus: Ketol-acid reductoisomerase (NADP(+)) (491 aa).

The KARI N-terminal Rossmann domain occupies 15–208; the sequence is AQLGKCRFMG…GGHRAGVLES (194 aa). NADP(+)-binding positions include 45–48, R68, R76, S78, and 108–110; these read CGAQ and DKQ. H132 is a catalytic residue. G158 contributes to the NADP(+) binding site. KARI C-terminal knotted domains are found at residues 209 to 344 and 345 to 484; these read SFVA…TAPQ and YEGK…MTDM. 4 residues coordinate Mg(2+): D217, E221, E389, and E393. S414 contributes to the substrate binding site.

Belongs to the ketol-acid reductoisomerase family. Mg(2+) serves as cofactor.

The catalysed reaction is (2R)-2,3-dihydroxy-3-methylbutanoate + NADP(+) = (2S)-2-acetolactate + NADPH + H(+). The enzyme catalyses (2R,3R)-2,3-dihydroxy-3-methylpentanoate + NADP(+) = (S)-2-ethyl-2-hydroxy-3-oxobutanoate + NADPH + H(+). It functions in the pathway amino-acid biosynthesis; L-isoleucine biosynthesis; L-isoleucine from 2-oxobutanoate: step 2/4. The protein operates within amino-acid biosynthesis; L-valine biosynthesis; L-valine from pyruvate: step 2/4. Involved in the biosynthesis of branched-chain amino acids (BCAA). Catalyzes an alkyl-migration followed by a ketol-acid reduction of (S)-2-acetolactate (S2AL) to yield (R)-2,3-dihydroxy-isovalerate. In the isomerase reaction, S2AL is rearranged via a Mg-dependent methyl migration to produce 3-hydroxy-3-methyl-2-ketobutyrate (HMKB). In the reductase reaction, this 2-ketoacid undergoes a metal-dependent reduction by NADPH to yield (R)-2,3-dihydroxy-isovalerate. The protein is Ketol-acid reductoisomerase (NADP(+)) of Escherichia fergusonii (strain ATCC 35469 / DSM 13698 / CCUG 18766 / IAM 14443 / JCM 21226 / LMG 7866 / NBRC 102419 / NCTC 12128 / CDC 0568-73).